The following is a 267-amino-acid chain: Thiamine thiazole synthase (267 aa).

Residues Ser41, Glu60 to Arg61, Gly68, Val132, and His160 to Asp162 contribute to the NAD(+) site. Positions 162 and 177 each coordinate Fe cation. NAD(+) is bound at residue Met227. Arg237 is a glycine binding site.

Belongs to the THI4 family. Homooctamer; tetramer of dimers. Fe(2+) serves as cofactor.

The enzyme catalyses hydrogen sulfide + glycine + NAD(+) = ADP-5-ethyl-4-methylthiazole-2-carboxylate + nicotinamide + 3 H2O + H(+). It functions in the pathway cofactor biosynthesis; thiamine diphosphate biosynthesis. Involved in the biosynthesis of the thiazole moiety of thiamine. Catalyzes the conversion of NAD and glycine to adenosine diphosphate 5-(2-hydroxyethyl)-4-methylthiazole-2-carboxylate (ADT), an adenylated thiazole intermediate, using free sulfide as a source of sulfur. In Saccharolobus islandicus (strain Y.N.15.51 / Yellowstone #2) (Sulfolobus islandicus), this protein is Thiamine thiazole synthase.